The following is a 295-amino-acid chain: Ethanolamine ammonia-lyase small subunit (295 aa).

Val-207, Glu-228, and Cys-258 together coordinate adenosylcob(III)alamin.

It belongs to the EutC family. The basic unit is a heterodimer which dimerizes to form tetramers. The heterotetramers trimerize; 6 large subunits form a core ring with 6 small subunits projecting outwards. Adenosylcob(III)alamin is required as a cofactor.

Its subcellular location is the bacterial microcompartment. The catalysed reaction is ethanolamine = acetaldehyde + NH4(+). Its pathway is amine and polyamine degradation; ethanolamine degradation. Its function is as follows. Catalyzes the deamination of various vicinal amino-alcohols to oxo compounds. Allows this organism to utilize ethanolamine as the sole source of nitrogen and carbon in the presence of external vitamin B12. The polypeptide is Ethanolamine ammonia-lyase small subunit (Shigella sonnei (strain Ss046)).